The primary structure comprises 308 residues: Olfactory receptor 5K1 (308 aa).

Residues 1–25 (MAEENHTMKNEFILTGFTDHPELKT) lie on the Extracellular side of the membrane. N-linked (GlcNAc...) asparagine glycosylation is present at Asn-5. Residues 26-46 (LLFVVFFAIYLITVVGNISLV) traverse the membrane as a helical segment. Over 47–54 (ALIFTHRR) the chain is Cytoplasmic. A helical transmembrane segment spans residues 55 to 75 (LHTPMYIFLGNLALVDSCCAC). Over 76–99 (AITPKMLENFFSENKRISLYECAV) the chain is Extracellular. A disulfide bridge links Cys-97 with Cys-189. A helical transmembrane segment spans residues 100 to 120 (QFYFLCTVETADCFLLAAMAY). The Cytoplasmic portion of the chain corresponds to 121–139 (DRYVAICNPLQYHIMMSKK). The helical transmembrane segment at 140-160 (LCIQMTTGAFIAGNLHSMIHV) threads the bilayer. The Extracellular segment spans residues 161–196 (GLVFRLVFCGSNHINHFYCDILPLYRLSCVDPYINE). A helical membrane pass occupies residues 197–217 (LVLFIFSGSVQVFTIGSVLIS). Residues 218–237 (YLYILLTIFKMKSKEGRAKA) are Cytoplasmic-facing. The helical transmembrane segment at 238–258 (FSTCASHFLSVSLFYGSLFFM) threads the bilayer. The Extracellular segment spans residues 259–271 (YVRPNLLEEGDKD). A helical transmembrane segment spans residues 272 to 292 (IPAAILFTIVVPLLNPFIYSL). Over 293-308 (RNREVISVLRKILMKK) the chain is Cytoplasmic.

It belongs to the G-protein coupled receptor 1 family.

It is found in the cell membrane. Its function is as follows. Odorant receptor. The chain is Olfactory receptor 5K1 (OR5K1) from Homo sapiens (Human).